Consider the following 1087-residue polypeptide: Error-prone DNA polymerase 3 (1087 aa).

A disordered region spans residues 1040–1064 (AGRGDEFAHGSPGSSDTRDKSKPVV).

It belongs to the DNA polymerase type-C family. DnaE2 subfamily.

Its subcellular location is the cytoplasm. It carries out the reaction DNA(n) + a 2'-deoxyribonucleoside 5'-triphosphate = DNA(n+1) + diphosphate. In terms of biological role, DNA polymerase involved in damage-induced mutagenesis and translesion synthesis (TLS). It is not the major replicative DNA polymerase. The protein is Error-prone DNA polymerase 3 of Agrobacterium fabrum (strain C58 / ATCC 33970) (Agrobacterium tumefaciens (strain C58)).